Consider the following 423-residue polypeptide: POU domain, class 5, transcription factor 1.3 (423 aa).

The disordered stretch occupies residues 85–211 (GALSSGDPSP…GSGNEEDGTT (127 aa)). The span at 94 to 110 (PEGRNEEDHGSISEERS) shows a compositional bias: basic and acidic residues. Composition is skewed to polar residues over residues 111–120 (SGTPSPNSPM), 156–173 (PQQS…GASN), and 194–203 (PSPNNASFGS). A POU-specific domain is found at 207–281 (EDGTTLEEME…LLEQWLGEAE (75 aa)). A DNA-binding region (homeobox) is located at residues 301 to 360 (KRKMRTCFDSVLKGRLEGHFMCNQKPGARELAEIAKELGLEKDVVRVWFCNRRQKEKSKS).

It belongs to the POU transcription factor family. Class-5 subfamily. As to quaternary structure, interacts with the transcription factors tcf7l1/tcf3 and vegt.

The protein resides in the nucleus. Functionally, transcription factor that binds to the octamer motif (5'-ATTTGCAT-3'). Antagonizes the activity of nodal/activin signaling during gastrulation to suppress mesendoderm formation. Acts maternally to inhibit vegt and beta-catenin-activated gene transcription, probably by forming a transcriptional repression complex on the promoters of target genes. Binds to an octamer motif in interspersed RNA. The chain is POU domain, class 5, transcription factor 1.3 (pou5f1.3) from Xenopus tropicalis (Western clawed frog).